The following is a 447-amino-acid chain: NAC domain containing protein 50 (447 aa).

The segment at 1–21 (MGRESLAVVSSPPSATAPSTA) is disordered. An NAC domain is found at 27–178 (LAPGFRFHPT…AYVLCRVFHK (152 aa)). A DNA-binding region spans residues 126-184 (LGMKKTLVFHSGRAPDGLRTNWVMHEYRLVEYETETNGSLLQDAYVLCRVFHKNNIGPP). Disordered regions lie at residues 246 to 303 (DATP…NKEA) and 371 to 392 (KENQ…EEKV). Residues 281–293 (TLKREHAEEDERP) are compositionally biased toward basic and acidic residues. Positions 392–447 (VNDLQKEVHQMSVERETFKLEMMSAEAMISILQSRIDALRQENEELKKKNASGQAS) form a coiled coil.

In terms of assembly, interacts with JMJ14 and NAC052. As to expression, mostly expressed in floral organs, and, at low levels, in other organs.

The protein localises to the nucleus. In terms of biological role, transcriptional repressor that binds to the motif 5'-(C/T)A(C/A)G-3' in the promoter of target genes. Also binds to the 5'-CTTGNNNNNCAAG-3' consensus sequence in chromatin. Can bind to the mitochondrial dysfunction motif (MDM) present in the upstream regions of mitochondrial dysfunction stimulon (MDS) genes involved in mitochondrial retrograde regulation (MRR). Together with NAC051/NAC052 and JMJ14, regulates gene expression and flowering time by associating with the histone demethylase JMJ14, probably by the promotion of RNA-mediated gene silencing. This chain is NAC domain containing protein 50, found in Arabidopsis thaliana (Mouse-ear cress).